The chain runs to 31 residues: Malate dehydrogenase, mitochondrial (31 aa).

NAD(+)-binding positions include 9 to 19 (GIGQPLSLLMK) and 20 to 31 (DDLFNINAGIVK).

Belongs to the LDH/MDH superfamily. MDH type 1 family. In terms of assembly, homodimer.

Its subcellular location is the mitochondrion matrix. The enzyme catalyses (S)-malate + NAD(+) = oxaloacetate + NADH + H(+). This Imperata cylindrica (Cogon grass) protein is Malate dehydrogenase, mitochondrial.